The primary structure comprises 449 residues: Glucose-6-phosphate isomerase (449 aa).

The active-site Proton donor is Glu-290. Active-site residues include His-311 and Lys-425.

Belongs to the GPI family.

Its subcellular location is the cytoplasm. The enzyme catalyses alpha-D-glucose 6-phosphate = beta-D-fructose 6-phosphate. The protein operates within carbohydrate biosynthesis; gluconeogenesis. Its pathway is carbohydrate degradation; glycolysis; D-glyceraldehyde 3-phosphate and glycerone phosphate from D-glucose: step 2/4. In terms of biological role, catalyzes the reversible isomerization of glucose-6-phosphate to fructose-6-phosphate. This Clostridium tetani (strain Massachusetts / E88) protein is Glucose-6-phosphate isomerase.